A 306-amino-acid polypeptide reads, in one-letter code: Recombination-associated protein RdgC (306 aa).

This sequence belongs to the RdgC family.

It is found in the cytoplasm. It localises to the nucleoid. In terms of biological role, may be involved in recombination. The chain is Recombination-associated protein RdgC from Pseudomonas entomophila (strain L48).